The chain runs to 447 residues: Phosphoglucosamine mutase (447 aa).

Ser106 serves as the catalytic Phosphoserine intermediate. Ser106, Asp245, Asp247, and Asp249 together coordinate Mg(2+). Ser106 is subject to Phosphoserine.

This sequence belongs to the phosphohexose mutase family. Mg(2+) serves as cofactor. Post-translationally, activated by phosphorylation.

It catalyses the reaction alpha-D-glucosamine 1-phosphate = D-glucosamine 6-phosphate. Catalyzes the conversion of glucosamine-6-phosphate to glucosamine-1-phosphate. The polypeptide is Phosphoglucosamine mutase (Cupriavidus pinatubonensis (strain JMP 134 / LMG 1197) (Cupriavidus necator (strain JMP 134))).